Reading from the N-terminus, the 120-residue chain is Large ribosomal subunit protein bL19 (120 aa).

This sequence belongs to the bacterial ribosomal protein bL19 family.

This protein is located at the 30S-50S ribosomal subunit interface and may play a role in the structure and function of the aminoacyl-tRNA binding site. This chain is Large ribosomal subunit protein bL19, found in Picosynechococcus sp. (strain ATCC 27264 / PCC 7002 / PR-6) (Agmenellum quadruplicatum).